Here is a 413-residue protein sequence, read N- to C-terminus: Multifunctional CCA protein (413 aa).

Glycine 8 and arginine 11 together coordinate ATP. CTP-binding residues include glycine 8 and arginine 11. 2 residues coordinate Mg(2+): aspartate 21 and aspartate 23. The ATP site is built by arginine 91, arginine 137, and arginine 140. CTP-binding residues include arginine 91, arginine 137, and arginine 140. The HD domain maps to 228 to 329 (TGIHTLMVLA…LKVFDKADAW (102 aa)).

This sequence belongs to the tRNA nucleotidyltransferase/poly(A) polymerase family. Bacterial CCA-adding enzyme type 1 subfamily. Monomer. Can also form homodimers and oligomers. Mg(2+) serves as cofactor. Requires Ni(2+) as cofactor.

The catalysed reaction is a tRNA precursor + 2 CTP + ATP = a tRNA with a 3' CCA end + 3 diphosphate. The enzyme catalyses a tRNA with a 3' CCA end + 2 CTP + ATP = a tRNA with a 3' CCACCA end + 3 diphosphate. Functionally, catalyzes the addition and repair of the essential 3'-terminal CCA sequence in tRNAs without using a nucleic acid template. Adds these three nucleotides in the order of C, C, and A to the tRNA nucleotide-73, using CTP and ATP as substrates and producing inorganic pyrophosphate. tRNA 3'-terminal CCA addition is required both for tRNA processing and repair. Also involved in tRNA surveillance by mediating tandem CCA addition to generate a CCACCA at the 3' terminus of unstable tRNAs. While stable tRNAs receive only 3'-terminal CCA, unstable tRNAs are marked with CCACCA and rapidly degraded. This chain is Multifunctional CCA protein, found in Aeromonas salmonicida (strain A449).